The primary structure comprises 687 residues: Glycine--tRNA ligase beta subunit (687 aa).

The protein belongs to the class-II aminoacyl-tRNA synthetase family. In terms of assembly, tetramer of two alpha and two beta subunits.

The protein resides in the cytoplasm. It carries out the reaction tRNA(Gly) + glycine + ATP = glycyl-tRNA(Gly) + AMP + diphosphate. The protein is Glycine--tRNA ligase beta subunit of Citrifermentans bemidjiense (strain ATCC BAA-1014 / DSM 16622 / JCM 12645 / Bem) (Geobacter bemidjiensis).